A 66-amino-acid polypeptide reads, in one-letter code: MKILYLLLAVLLTVLQSSLGFMRVPNNEAQCEQAGGICSKDHCFHLHTRAFGHCQRGVPCCRTVYD.

The signal sequence occupies residues 1-19 (MKILYLLLAVLLTVLQSSL). Residues 20–25 (GFMRVP) constitute a propeptide that is removed on maturation. Disulfide bonds link Cys31–Cys60, Cys38–Cys54, and Cys43–Cys61.

This sequence belongs to the beta-defensin family. In terms of tissue distribution, expressed in the liver, kidney, gall bladder, testis, ovary and male and femae reproductive tracts. Expressed in the ovarian stroma and the theca and granulosa layers of the ovarian follicle.

The protein resides in the secreted. Its subcellular location is the cytoplasmic granule. In terms of biological role, has bactericidal activity. The sequence is that of Gallinacin-8 (GAL8) from Gallus gallus (Chicken).